Here is a 206-residue protein sequence, read N- to C-terminus: Small ribosomal subunit protein uS4 (206 aa).

In terms of domain architecture, S4 RNA-binding spans 96–156 (SRLDNVVYRM…EKSKKQVRIA (61 aa)).

This sequence belongs to the universal ribosomal protein uS4 family. As to quaternary structure, part of the 30S ribosomal subunit. Contacts protein S5. The interaction surface between S4 and S5 is involved in control of translational fidelity.

Its function is as follows. One of the primary rRNA binding proteins, it binds directly to 16S rRNA where it nucleates assembly of the body of the 30S subunit. Functionally, with S5 and S12 plays an important role in translational accuracy. The sequence is that of Small ribosomal subunit protein uS4 from Laribacter hongkongensis (strain HLHK9).